We begin with the raw amino-acid sequence, 388 residues long: Arginine biosynthesis bifunctional protein ArgJ (388 aa).

Residues Thr-150, Lys-172, Thr-183, Glu-263, Asn-383, and Ser-388 each contribute to the substrate site. Thr-183 (nucleophile) is an active-site residue.

Belongs to the ArgJ family. In terms of assembly, heterotetramer of two alpha and two beta chains.

The protein localises to the cytoplasm. The catalysed reaction is N(2)-acetyl-L-ornithine + L-glutamate = N-acetyl-L-glutamate + L-ornithine. The enzyme catalyses L-glutamate + acetyl-CoA = N-acetyl-L-glutamate + CoA + H(+). The protein operates within amino-acid biosynthesis; L-arginine biosynthesis; L-ornithine and N-acetyl-L-glutamate from L-glutamate and N(2)-acetyl-L-ornithine (cyclic): step 1/1. It functions in the pathway amino-acid biosynthesis; L-arginine biosynthesis; N(2)-acetyl-L-ornithine from L-glutamate: step 1/4. Functionally, catalyzes two activities which are involved in the cyclic version of arginine biosynthesis: the synthesis of N-acetylglutamate from glutamate and acetyl-CoA as the acetyl donor, and of ornithine by transacetylation between N(2)-acetylornithine and glutamate. This chain is Arginine biosynthesis bifunctional protein ArgJ, found in Corynebacterium glutamicum (strain ATCC 13032 / DSM 20300 / JCM 1318 / BCRC 11384 / CCUG 27702 / LMG 3730 / NBRC 12168 / NCIMB 10025 / NRRL B-2784 / 534).